Here is a 488-residue protein sequence, read N- to C-terminus: 1-hydroxycarotenoid 3,4-desaturase (488 aa).

Residues Glu-31, Lys-39, 55–56 (SL), Val-247, Asn-275, Leu-431, Gly-461, and 468–469 (GI) each bind FAD.

The protein belongs to the carotenoid/retinoid oxidoreductase family. Monomer.

The catalysed reaction is rhodopin + A = (3E)-3,4-didehydrorhodopin + AH2. It catalyses the reaction 1'-hydroxy-gamma-carotene + A = 1'-hydroxytorulene + AH2. It carries out the reaction 1-hydroxy-all-trans-1,2-dihydro-neurosporene + A = demethylspheroidene + AH2. The enzyme catalyses 1,1'-dihydroxy-1,1',2,2'-tetrahydroneurosporene + A = 1'-hydroxy-demethylspheroidene + AH2. The catalysed reaction is 1,1'-dihydroxy-1,1',2,2'-tetrahydrolycopene + A = 1,1'-dihydroxy-3,4-didehydro-1,2-dihydrolycopene + AH2. It participates in carotenoid biosynthesis. Its function is as follows. Catalyzes the introduction of a C-3,4 double bond into 1'-hydroxy-gamma-carotene and rhodopin (1-hydroxylycopene) to yield 1'-hydroxytorulene and (3E)-3,4-didehydrorhodopin, respectively. Can also 1-hydroxy-all-trans-1,2-dihydro-neurosporene, 1,1'-dihydroxy-1,1',2,2'-tetrahydroneurosporene and 1,1'-dihydroxy-1,1',2,2'-tetrahydrolycopene. Probably involved in the synthesis of myxol, a gamma-carotene derivative. May use FAD as a proton acceptor. This is 1-hydroxycarotenoid 3,4-desaturase from Flavobacterium sp. (strain P99-3).